Consider the following 396-residue polypeptide: Probable tRNA sulfurtransferase (396 aa).

The THUMP domain occupies 58–169 (NQFIEKLKMV…KKNIYVFTRS (112 aa)). ATP-binding positions include 187 to 188 (LL), 212 to 213 (YF), R269, G291, and Q300.

Belongs to the ThiI family.

It is found in the cytoplasm. It catalyses the reaction [ThiI sulfur-carrier protein]-S-sulfanyl-L-cysteine + a uridine in tRNA + 2 reduced [2Fe-2S]-[ferredoxin] + ATP + H(+) = [ThiI sulfur-carrier protein]-L-cysteine + a 4-thiouridine in tRNA + 2 oxidized [2Fe-2S]-[ferredoxin] + AMP + diphosphate. It carries out the reaction [ThiS sulfur-carrier protein]-C-terminal Gly-Gly-AMP + S-sulfanyl-L-cysteinyl-[cysteine desulfurase] + AH2 = [ThiS sulfur-carrier protein]-C-terminal-Gly-aminoethanethioate + L-cysteinyl-[cysteine desulfurase] + A + AMP + 2 H(+). Its pathway is cofactor biosynthesis; thiamine diphosphate biosynthesis. In terms of biological role, catalyzes the ATP-dependent transfer of a sulfur to tRNA to produce 4-thiouridine in position 8 of tRNAs, which functions as a near-UV photosensor. Also catalyzes the transfer of sulfur to the sulfur carrier protein ThiS, forming ThiS-thiocarboxylate. This is a step in the synthesis of thiazole, in the thiamine biosynthesis pathway. The sulfur is donated as persulfide by IscS. This chain is Probable tRNA sulfurtransferase, found in Halothermothrix orenii (strain H 168 / OCM 544 / DSM 9562).